We begin with the raw amino-acid sequence, 657 residues long: Glycogen debranching enzyme (657 aa).

Asp336 functions as the Nucleophile in the catalytic mechanism. Glu371 functions as the Proton donor in the catalytic mechanism. The segment at 460–479 (ANGEENRDGTNNNYSNNHGK) is disordered.

This sequence belongs to the glycosyl hydrolase 13 family.

The enzyme catalyses Hydrolysis of (1-&gt;6)-alpha-D-glucosidic linkages to branches with degrees of polymerization of three or four glucose residues in limit dextrin.. Its pathway is glycan degradation; glycogen degradation. Functionally, removes maltotriose and maltotetraose chains that are attached by 1,6-alpha-linkage to the limit dextrin main chain, generating a debranched limit dextrin. In Escherichia coli O81 (strain ED1a), this protein is Glycogen debranching enzyme.